The primary structure comprises 101 residues: NAD(P)H-quinone oxidoreductase subunit 4L, chloroplastic (101 aa).

The next 3 helical transmembrane spans lie at 2 to 22 (ILEH…YGLI), 32 to 52 (MCLE…SDFF), and 61 to 81 (IFCI…LAIV).

This sequence belongs to the complex I subunit 4L family. In terms of assembly, NDH is composed of at least 16 different subunits, 5 of which are encoded in the nucleus.

The protein localises to the plastid. The protein resides in the chloroplast thylakoid membrane. The catalysed reaction is a plastoquinone + NADH + (n+1) H(+)(in) = a plastoquinol + NAD(+) + n H(+)(out). It catalyses the reaction a plastoquinone + NADPH + (n+1) H(+)(in) = a plastoquinol + NADP(+) + n H(+)(out). Functionally, NDH shuttles electrons from NAD(P)H:plastoquinone, via FMN and iron-sulfur (Fe-S) centers, to quinones in the photosynthetic chain and possibly in a chloroplast respiratory chain. The immediate electron acceptor for the enzyme in this species is believed to be plastoquinone. Couples the redox reaction to proton translocation, and thus conserves the redox energy in a proton gradient. The protein is NAD(P)H-quinone oxidoreductase subunit 4L, chloroplastic of Aethionema cordifolium (Lebanon stonecress).